Here is a 473-residue protein sequence, read N- to C-terminus: Vasculin-like protein 1 (473 aa).

The segment covering 14–25 (STPQSSKSSTAT) has biased composition (polar residues). The tract at residues 14-55 (STPQSSKSSTATFDKHGEHLSRGEGRFGISRRRHNSSDGFFN) is disordered. The span at 26-38 (FDKHGEHLSRGEG) shows a compositional bias: basic and acidic residues. Phosphoserine is present on residues serine 49 and serine 76. Disordered stretches follow at residues 88-127 (GTTG…RKGC) and 155-189 (DFPS…AKQP). A compositionally biased stretch (polar residues) spans 103–112 (SQRSGGSSTG). The span at 113-125 (NHRHWNGSFHSRK) shows a compositional bias: basic residues. Residue serine 199 is modified to Phosphoserine. 2 disordered regions span residues 235 to 267 (LVPK…SRES) and 281 to 316 (LAAG…RRTT). A Phosphoserine modification is found at serine 289. Low complexity predominate over residues 292–309 (ESPSSTTPPIEISSSRLT). Position 298 is a phosphothreonine (threonine 298). Serine 381 bears the Phosphoserine mark. Residues 453-473 (ECEDSDSETSSSQTSDDDAWK) form a disordered region.

This sequence belongs to the vasculin family.

It localises to the nucleus. In terms of biological role, possible transcription factor. This Mus musculus (Mouse) protein is Vasculin-like protein 1 (Gpbp1l1).